Reading from the N-terminus, the 392-residue chain is Formate-dependent phosphoribosylglycinamide formyltransferase (392 aa).

Residues 22–23 (EL) and Glu-82 contribute to the N(1)-(5-phospho-beta-D-ribosyl)glycinamide site. Residues Arg-114, Lys-155, 160–165 (SSGKGQ), 195–198 (EGVV), and Glu-203 contribute to the ATP site. An ATP-grasp domain is found at 119-308 (RLAAEELQLP…EFALHVRAFL (190 aa)). The Mg(2+) site is built by Glu-267 and Glu-279. N(1)-(5-phospho-beta-D-ribosyl)glycinamide contacts are provided by residues Asp-286, Lys-355, and 362–363 (RR).

This sequence belongs to the PurK/PurT family. In terms of assembly, homodimer.

The catalysed reaction is N(1)-(5-phospho-beta-D-ribosyl)glycinamide + formate + ATP = N(2)-formyl-N(1)-(5-phospho-beta-D-ribosyl)glycinamide + ADP + phosphate + H(+). Its pathway is purine metabolism; IMP biosynthesis via de novo pathway; N(2)-formyl-N(1)-(5-phospho-D-ribosyl)glycinamide from N(1)-(5-phospho-D-ribosyl)glycinamide (formate route): step 1/1. Involved in the de novo purine biosynthesis. Catalyzes the transfer of formate to 5-phospho-ribosyl-glycinamide (GAR), producing 5-phospho-ribosyl-N-formylglycinamide (FGAR). Formate is provided by PurU via hydrolysis of 10-formyl-tetrahydrofolate. This Shigella boydii serotype 18 (strain CDC 3083-94 / BS512) protein is Formate-dependent phosphoribosylglycinamide formyltransferase.